A 287-amino-acid polypeptide reads, in one-letter code: MAAEARVSRWYFGGLASCGAACCTHPLDLLKVHLQTQQEVKLRMTGMALRVVRTDGILALYSGLSASLCRQMTYSLTRFAIYETVRDRVAKGSQGPLPFHEKVLLGSVSGLAGGFVGTPADLVNVRMQNDVKLPQGQRRNYAHALDGLYRVAREEGLRRLFSGATMASSRGALVTVGQLSCYDQAKQLVLSTGYLSDNIFTHFVASFIAGGCATFLCQPLDVLKTRLMNSKGEYQGVFHCAVETAKLGPLAFYKGLVPAGIRLIPHTVLTFVFLEQLRKNFGIKVPS.

Solcar repeat units lie at residues 8-88, 101-188, and 197-280; these read SRWY…VRDR, EKVL…AKQL, and DNIF…LRKN. 6 consecutive transmembrane segments (helical) span residues 10–30, 63–82, 103–123, 163–182, 203–223, and 255–275; these read WYFG…LDLL, GLSA…FAIY, VLLG…ADLV, GATM…LSCY, FVAS…LDVL, and GLVP…VFLE.

It belongs to the mitochondrial carrier (TC 2.A.29) family. As to expression, present in high amounts in liver and kidney, and at lower levels in all the other tissues analyzed.

It is found in the mitochondrion inner membrane. The catalysed reaction is (S)-malate(in) + phosphate(out) = (S)-malate(out) + phosphate(in). The enzyme catalyses malonate(out) + (S)-malate(in) = malonate(in) + (S)-malate(out). It catalyses the reaction (S)-malate(in) + succinate(out) = (S)-malate(out) + succinate(in). It carries out the reaction (S)-malate(in) + sulfate(out) = (S)-malate(out) + sulfate(in). The catalysed reaction is malonate(out) + phosphate(in) = malonate(in) + phosphate(out). The enzyme catalyses succinate(out) + phosphate(in) = succinate(in) + phosphate(out). It catalyses the reaction sulfate(out) + phosphate(in) = sulfate(in) + phosphate(out). It carries out the reaction malonate(out) + succinate(in) = malonate(in) + succinate(out). In terms of biological role, catalyzes the electroneutral exchange or flux of physiologically important metabolites such as dicarboxylates (malonate, malate, succinate), inorganic sulfur-containing anions, and phosphate, across mitochondrial inner membrane. Plays an important role in gluconeogenesis, fatty acid metabolism, urea synthesis, and sulfur metabolism, particularly in liver, by supplying the substrates for the different metabolic processes. Regulates fatty acid release from adipocytes, and contributes to systemic insulin sensitivity. The chain is Mitochondrial dicarboxylate carrier (SLC25A10) from Homo sapiens (Human).